Reading from the N-terminus, the 593-residue chain is UvrABC system protein C (593 aa).

The region spanning 14–91 (DSPGCYLHKD…IQENMPKYNI (78 aa)) is the GIY-YIG domain. A UVR domain is found at 196 to 231 (NKIVNGLTEKMKSAAMTMEFERAAEYRDLIEAISLL).

This sequence belongs to the UvrC family. Interacts with UvrB in an incision complex.

It localises to the cytoplasm. In terms of biological role, the UvrABC repair system catalyzes the recognition and processing of DNA lesions. UvrC both incises the 5' and 3' sides of the lesion. The N-terminal half is responsible for the 3' incision and the C-terminal half is responsible for the 5' incision. This is UvrABC system protein C from Streptococcus agalactiae serotype Ia (strain ATCC 27591 / A909 / CDC SS700).